Reading from the N-terminus, the 1230-residue chain is Cullin-associated NEDD8-dissociated protein 1 (1230 aa).

Position 2 is an N-acetylalanine (Ala2). HEAT repeat units follow at residues 2 to 39, 44 to 81, 83 to 119, 131 to 165, 171 to 208, 210 to 247, 248 to 282, 289 to 366, 370 to 407, 424 to 467, 471 to 510, and 515 to 552; these read ASAS…KDSI, DSER…KVKE, QVET…ELPP, CKKI…LSRQ, NFHP…SCGN, VFVG…QAGH, RIGE…FESF, EVYP…TRHE, EFYK…QTRP, PLTM…VLPG, QHIP…NHSP, and PHVQ…VIRP. Residue Lys55 is modified to N6-acetyllysine. Residues 315–343 are disordered; the sequence is DEDEDENAMDADGGDDDDQGSDDEYSDDG. Ser335 is modified (phosphoserine). Ser558 is subject to Phosphoserine. HEAT repeat units follow at residues 563 to 602, 606 to 643, 646 to 683, 688 to 725, 729 to 768, 770 to 808, 809 to 845, 852 to 889, 890 to 927, 928 to 960, 961 to 998, 1002 to 1039, 1043 to 1097, 1099 to 1133, and 1140 to 1189; these read PYIK…NLGD, SDLP…LKID, PVLG…NYSD, AMID…VYPS, KISG…TGTN, LGYM…ALTR, ACPK…LGEV, SGQL…GNLP, EYLP…GLKP, YVEN…KLTL, IDPE…DHPQ, PLLK…NKPS, DLLD…DSCL, RLDI…LSTL, and QRLD…IPEA. Lys971 carries the post-translational modification N6-acetyllysine.

The protein belongs to the CAND family. Interacts with TBP. Part of a complex that contains CUL1 and RBX1. Interacts with unneddylated cullins: interacts with CUL1, CUL2, CUL3, CUL4A, CUL4B and CUL5. Does not bind neddylated CUL1. Interaction with cullins is abolished in presence of COMMD1, which antagonizes with CAND1 for interacting with cullins. Interacts with ERCC6. Interacts with DCUN1D1, DCUN1D2, DCUN1D3, DCUN1D4 and DCUN1D5; these interactions are bridged by cullins and strongly inhibits the neddylation of cullins.

Its subcellular location is the cytoplasm. It localises to the nucleus. Functionally, key assembly factor of SCF (SKP1-CUL1-F-box protein) E3 ubiquitin ligase complexes that promotes the exchange of the substrate-recognition F-box subunit in SCF complexes, thereby playing a key role in the cellular repertoire of SCF complexes. Acts as a F-box protein exchange factor. The exchange activity of CAND1 is coupled with cycles of neddylation conjugation: in the deneddylated state, cullin-binding CAND1 binds CUL1-RBX1, increasing dissociation of the SCF complex and promoting exchange of the F-box protein. Probably plays a similar role in other cullin-RING E3 ubiquitin ligase complexes. This Pongo abelii (Sumatran orangutan) protein is Cullin-associated NEDD8-dissociated protein 1 (CAND1).